Reading from the N-terminus, the 721-residue chain is Exocyst complex component 3-like protein 4 (721 aa).

Disordered stretches follow at residues 1 to 52 (MPLP…SLGM) and 94 to 135 (GLTA…QAES). A compositionally biased stretch (polar residues) spans 22-37 (SQTLPVTTWKSNSMKE). A Phosphoserine modification is found at Ser-515.

The protein belongs to the SEC6 family.

The polypeptide is Exocyst complex component 3-like protein 4 (Exoc3l4) (Mus musculus (Mouse)).